The primary structure comprises 196 residues: Probable GTP-binding protein EngB (196 aa).

Residues 24-196 (ELSEVALSGR…IWNLIEPYIS (173 aa)) form the EngB-type G domain. Residues 32-39 (GRSNVGKS), 59-63 (GKTQT), 77-80 (DVPG), 144-147 (TKED), and 176-178 (YSS) each bind GTP. Mg(2+) contacts are provided by serine 39 and threonine 61.

This sequence belongs to the TRAFAC class TrmE-Era-EngA-EngB-Septin-like GTPase superfamily. EngB GTPase family. The cofactor is Mg(2+).

Its function is as follows. Necessary for normal cell division and for the maintenance of normal septation. The protein is Probable GTP-binding protein EngB of Staphylococcus aureus (strain MW2).